Consider the following 223-residue polypeptide: Ribosomal RNA small subunit methyltransferase G (223 aa).

S-adenosyl-L-methionine is bound by residues Gly-85, Phe-90, and Arg-154.

It belongs to the methyltransferase superfamily. RNA methyltransferase RsmG family.

The protein localises to the cytoplasm. It catalyses the reaction guanosine(527) in 16S rRNA + S-adenosyl-L-methionine = N(7)-methylguanosine(527) in 16S rRNA + S-adenosyl-L-homocysteine. Specifically methylates the N7 position of guanine in position 527 of 16S rRNA. The chain is Ribosomal RNA small subunit methyltransferase G from Rhodopseudomonas palustris (strain TIE-1).